A 222-amino-acid polypeptide reads, in one-letter code: Ribosomal RNA large subunit methyltransferase E (222 aa).

The S-adenosyl-L-methionine site is built by Gly-64, Trp-66, Asp-92, Asp-108, and Asp-133. Catalysis depends on Lys-173, which acts as the Proton acceptor.

This sequence belongs to the class I-like SAM-binding methyltransferase superfamily. RNA methyltransferase RlmE family.

It localises to the cytoplasm. The enzyme catalyses uridine(2552) in 23S rRNA + S-adenosyl-L-methionine = 2'-O-methyluridine(2552) in 23S rRNA + S-adenosyl-L-homocysteine + H(+). Specifically methylates the uridine in position 2552 of 23S rRNA at the 2'-O position of the ribose in the fully assembled 50S ribosomal subunit. This chain is Ribosomal RNA large subunit methyltransferase E, found in Variovorax paradoxus (strain S110).